A 263-amino-acid polypeptide reads, in one-letter code: Probable methylthioribulose-1-phosphate dehydratase (263 aa).

Residue Cys-102 participates in substrate binding. Zn(2+)-binding residues include His-120 and His-122. Residue Glu-144 is the Proton donor/acceptor of the active site. His-200 lines the Zn(2+) pocket.

The protein belongs to the aldolase class II family. MtnB subfamily. The cofactor is Zn(2+).

It localises to the cytoplasm. It catalyses the reaction 5-(methylsulfanyl)-D-ribulose 1-phosphate = 5-methylsulfanyl-2,3-dioxopentyl phosphate + H2O. The protein operates within amino-acid biosynthesis; L-methionine biosynthesis via salvage pathway; L-methionine from S-methyl-5-thio-alpha-D-ribose 1-phosphate: step 2/6. Catalyzes the dehydration of methylthioribulose-1-phosphate (MTRu-1-P) into 2,3-diketo-5-methylthiopentyl-1-phosphate (DK-MTP-1-P). This is Probable methylthioribulose-1-phosphate dehydratase from Caenorhabditis elegans.